We begin with the raw amino-acid sequence, 349 residues long: Green-sensitive opsin-1 (349 aa).

Topologically, residues 1 to 36 (MNGTEGKNFYVPMSNRTGLVRSPFEYPQYYLAEPWQ) are extracellular. 2 N-linked (GlcNAc...) asparagine glycosylation sites follow: asparagine 2 and asparagine 15. The helical transmembrane segment at 37–61 (FKILALYLFFLMSMGLPINGLTLVV) threads the bilayer. Topologically, residues 62–73 (TAQHKKLRQPLN) are cytoplasmic. The chain crosses the membrane as a helical span at residues 74–99 (FILVNLAVAGTIMVCFGFTVTFYTAI). Residues 100–113 (NGYFVLGPTGCAVE) lie on the Extracellular side of the membrane. A disulfide bridge links cysteine 110 with cysteine 187. A helical transmembrane segment spans residues 114–133 (GFMATLGGEVALWSLVVLAI). Topologically, residues 134–152 (ERYIVVCKPMGSFKFSSSH) are cytoplasmic. The chain crosses the membrane as a helical span at residues 153–176 (AFAGIAFTWVMALACAAPPLFGWS). At 177-202 (RYIPEGMQCSCGPDYYTLNPDYNNES) the chain is on the extracellular side. The chain crosses the membrane as a helical span at residues 203 to 230 (YVIYMFVCHFILPVAVIFFTYGRLVCTV). Topologically, residues 231–252 (KAAAAQQQDSASTQKAEREVTK) are cytoplasmic. A helical transmembrane segment spans residues 253–276 (MVILMVFGFLIAWTPYATVAAWIF). Residues 277–284 (FNKGADFS) are Extracellular-facing. Residues 285 to 309 (AKFMAIPAFFSKSSALYNPVIYVLL) form a helical membrane-spanning segment. Lysine 296 carries the post-translational modification N6-(retinylidene)lysine. At 310 to 349 (NKQFRNCMLTTIFCGKNPLGDDESSTVSTSKTEVSSVSPA) the chain is on the cytoplasmic side. The interval 329–349 (GDDESSTVSTSKTEVSSVSPA) is disordered. The span at 334–349 (STVSTSKTEVSSVSPA) shows a compositional bias: low complexity.

The protein belongs to the G-protein coupled receptor 1 family. Opsin subfamily. Phosphorylated on some or all of the serine and threonine residues present in the C-terminal region. In terms of tissue distribution, the color pigments are found in the cone photoreceptor cells.

The protein localises to the membrane. Functionally, visual pigments are the light-absorbing molecules that mediate vision. They consist of an apoprotein, opsin, covalently linked to cis-retinal. This chain is Green-sensitive opsin-1, found in Carassius auratus (Goldfish).